The chain runs to 99 residues: Large ribosomal subunit protein uL23 (99 aa).

This sequence belongs to the universal ribosomal protein uL23 family. Part of the 50S ribosomal subunit. Contacts protein L29, and trigger factor when it is bound to the ribosome.

In terms of biological role, one of the early assembly proteins it binds 23S rRNA. One of the proteins that surrounds the polypeptide exit tunnel on the outside of the ribosome. Forms the main docking site for trigger factor binding to the ribosome. The polypeptide is Large ribosomal subunit protein uL23 (Rhodopseudomonas palustris (strain BisB18)).